The sequence spans 428 residues: Putative aminotransferase MSMEG_6286/MSMEI_6121 (428 aa).

Position 37 (glycine 37) interacts with substrate. Pyridoxal 5'-phosphate is bound by residues tyrosine 72, 102–105, asparagine 191, 222–225, and 256–258; these read ASLE, AYAV, and STS. Lysine 339 is covalently cross-linked (Isoglutamyl lysine isopeptide (Lys-Gln) (interchain with Q-Cter in protein Pup)).

It belongs to the class-I pyridoxal-phosphate-dependent aminotransferase family. The cofactor is pyridoxal 5'-phosphate.

This is Putative aminotransferase MSMEG_6286/MSMEI_6121 from Mycolicibacterium smegmatis (strain ATCC 700084 / mc(2)155) (Mycobacterium smegmatis).